The chain runs to 368 residues: tRNA-specific 2-thiouridylase MnmA (368 aa).

Residues Ala-10 to Ser-17 and Met-36 each bind ATP. Cys-106 functions as the Nucleophile in the catalytic mechanism. Cysteines 106 and 203 form a disulfide. Residue Gly-130 coordinates ATP. The tract at residues Lys-152–Gln-154 is interaction with tRNA. The Cysteine persulfide intermediate role is filled by Cys-203. The tract at residues Arg-313–Tyr-314 is interaction with tRNA.

Belongs to the MnmA/TRMU family.

It is found in the cytoplasm. It catalyses the reaction S-sulfanyl-L-cysteinyl-[protein] + uridine(34) in tRNA + AH2 + ATP = 2-thiouridine(34) in tRNA + L-cysteinyl-[protein] + A + AMP + diphosphate + H(+). Its function is as follows. Catalyzes the 2-thiolation of uridine at the wobble position (U34) of tRNA, leading to the formation of s(2)U34. The polypeptide is tRNA-specific 2-thiouridylase MnmA (Cytophaga hutchinsonii (strain ATCC 33406 / DSM 1761 / CIP 103989 / NBRC 15051 / NCIMB 9469 / D465)).